Here is a 492-residue protein sequence, read N- to C-terminus: Fascin-2 (492 aa).

It belongs to the fascin family. As to expression, exclusively expressed in the eye, specifically in photoreceptor cells.

The protein resides in the cytoplasm. It localises to the cytoskeleton. The protein localises to the cell projection. It is found in the stereocilium. Its function is as follows. Acts as an actin bundling protein. May play a pivotal role in photoreceptor cell-specific events, such as disk morphogenesis. The polypeptide is Fascin-2 (FSCN2) (Bos taurus (Bovine)).